The following is a 131-amino-acid chain: Synaptobrevin-like protein (131 aa).

Topologically, residues methionine 1–lysine 81 are cytoplasmic. Residues arginine 18–lysine 78 enclose the v-SNARE coiled-coil homology domain. The helical; Anchor for type IV membrane protein transmembrane segment at methionine 82–valine 102 threads the bilayer. Residues serine 103–glutamine 131 are Vesicular-facing. The disordered stretch occupies residues serine 112 to glutamine 131. A compositionally biased stretch (polar residues) spans aspartate 122–glutamine 131.

This sequence belongs to the synaptobrevin family.

Its subcellular location is the cytoplasmic vesicle. The protein resides in the secretory vesicle. It is found in the synaptic vesicle membrane. It localises to the synapse. The protein localises to the synaptosome. Functionally, unknown, but synaptobrevins are presumed to be involved in targeting and fusion of synaptic vesicles with the presynaptic membrane as well as in neurotransmitter release. The chain is Synaptobrevin-like protein from Schistosoma mansoni (Blood fluke).